The sequence spans 2367 residues: RNA1 polyprotein (2367 aa).

Residues 587 to 1194 (AKCEDLAVVS…GGRLLLILCS (608 aa)) are Cytoplasmic-facing. Residues 776 to 940 (ELRTLRNDMA…AGVAFNPHDS (165 aa)) form the SF3 helicase domain. 804–811 (GPPGVGKT) serves as a coordination point for ATP. A helical membrane pass occupies residues 1195-1215 (CMLLGIACYTFFNALAILIGG). The Lumenal portion of the chain corresponds to 1216–1235 (TSVAAGAAAMVDIGACGSTS). In terms of domain architecture, Peptidase C3 spans 1258–1468 (PAVWSEETGH…YVCKFPHIEV (211 aa)). Active-site for picornain 3C-like protease activity residues include histidine 1302, glutamate 1339, and cysteine 1432. The RdRp catalytic domain occupies 1832–1957 (DKMYCCDYSK…GIHPNIESAF (126 aa)).

Belongs to the nepoviruses RNA1 polyprotein family. Post-translationally, specific enzymatic cleavages by picornain 3C-like protease in vivo yield mature proteins. Picornain 3C-like protease is autocatalytically processed. In terms of processing, VPg is uridylylated by the polymerase and is covalently linked to the 5'-end of genomic RNA. This uridylylated form acts as a nucleotide-peptide primer for the polymerase.

It localises to the host endoplasmic reticulum lumen. It is found in the host endoplasmic reticulum membrane. The enzyme catalyses RNA(n) + a ribonucleoside 5'-triphosphate = RNA(n+1) + diphosphate. Functionally, picornain 3C-like protease is a thiol protease that cleaves the P1 and P2 polyproteins. This Fragaria vesca (Woodland strawberry) protein is RNA1 polyprotein.